Here is a 342-residue protein sequence, read N- to C-terminus: Phosphate acyltransferase (342 aa).

Belongs to the PlsX family. In terms of assembly, homodimer. Probably interacts with PlsY.

Its subcellular location is the cytoplasm. The catalysed reaction is a fatty acyl-[ACP] + phosphate = an acyl phosphate + holo-[ACP]. The protein operates within lipid metabolism; phospholipid metabolism. Its function is as follows. Catalyzes the reversible formation of acyl-phosphate (acyl-PO(4)) from acyl-[acyl-carrier-protein] (acyl-ACP). This enzyme utilizes acyl-ACP as fatty acyl donor, but not acyl-CoA. In Pelotomaculum thermopropionicum (strain DSM 13744 / JCM 10971 / SI), this protein is Phosphate acyltransferase.